We begin with the raw amino-acid sequence, 39 residues long: Photosystem II reaction center protein Y (39 aa).

The helical transmembrane segment at 5 to 23 (VLVVVGPLLIAASWAVFNI) threads the bilayer.

Belongs to the PsbY family. In terms of assembly, PSII is composed of 1 copy each of membrane proteins PsbA, PsbB, PsbC, PsbD, PsbE, PsbF, PsbH, PsbI, PsbJ, PsbK, PsbL, PsbM, PsbT, PsbX, PsbY, PsbZ, Psb30/Ycf12, peripheral proteins PsbO, CyanoQ (PsbQ), PsbU, PsbV and a large number of cofactors. It forms dimeric complexes.

The protein resides in the cellular thylakoid membrane. Its function is as follows. Loosely associated component of the core of photosystem II (PSII), it is not always seen in crystals. PSII is a light-driven water plastoquinone oxidoreductase, using light energy to abstract electrons from H(2)O, generating a proton gradient subsequently used for ATP formation. In Rippkaea orientalis (strain PCC 8801 / RF-1) (Cyanothece sp. (strain PCC 8801)), this protein is Photosystem II reaction center protein Y.